The sequence spans 358 residues: Fructose-bisphosphate aldolase 3, cytoplasmic (358 aa).

Arg-39 is a substrate binding site. Glu-183 (proton acceptor) is an active-site residue. The active-site Schiff-base intermediate with dihydroxyacetone-P is Lys-225. Residues 266–268 and Arg-298 each bind substrate; that span reads SGG.

The protein belongs to the class I fructose-bisphosphate aldolase family. As to quaternary structure, homotetramer.

The protein resides in the cytoplasm. The protein localises to the cytosol. It catalyses the reaction beta-D-fructose 1,6-bisphosphate = D-glyceraldehyde 3-phosphate + dihydroxyacetone phosphate. Its pathway is carbohydrate degradation; glycolysis; D-glyceraldehyde 3-phosphate and glycerone phosphate from D-glucose: step 4/4. Its function is as follows. Fructose-bisphosphate aldolase that plays a key role in glycolysis and gluconeogenesis. The sequence is that of Fructose-bisphosphate aldolase 3, cytoplasmic from Oryza sativa subsp. japonica (Rice).